Reading from the N-terminus, the 1875-residue chain is Neuron navigator 1 (1875 aa).

N-acetylmethionine is present on Met1. A disordered region spans residues 1–63 (MLGSSVKSVQ…GGSGSMAKAS (63 aa)). Ser93 and Ser145 each carry phosphoserine. 2 disordered regions span residues 115 to 230 (SDDM…EERA) and 280 to 339 (SSLR…VGGS). Thr162 is modified (phosphothreonine). Phosphoserine is present on residues Ser197 and Ser202. The stretch at 258-283 (ESQRKRTVQNVLDLRQNLEETMSSLR) forms a coiled coil. Over residues 280 to 291 (SSLRGSQVTHSS) the composition is skewed to polar residues. Residues Ser299, Ser311, Ser315, Ser365, and Ser394 each carry the phosphoserine modification. Positions 304 to 318 (PRSVSSLSNRSSPLS) are enriched in low complexity. Disordered regions lie at residues 391-463 (GYMS…RTDS) and 477-783 (SESE…AELP). Composition is skewed to low complexity over residues 414–428 (DESSSISSGLSDASD) and 436–456 (NASSSLNSLPTTPTASRRSST). 4 positions are modified to phosphoserine: Ser455, Ser477, Ser479, and Ser493. Residues 479–489 (SEEKTPKKLEY) are compositionally biased toward basic and acidic residues. Basic and acidic residues predominate over residues 506–522 (ERPESCDDASKGGELKK). The residue at position 531 (Ser531) is a Phosphoserine. Phosphothreonine is present on Thr537. At Ser544 the chain carries Phosphoserine. Thr547 is subject to Phosphothreonine. Positions 558–569 (GKPEGKATDKGK) are enriched in basic and acidic residues. A Phosphothreonine modification is found at Thr575. The segment covering 584 to 594 (AGRDRLSDAKK) has biased composition (basic and acidic residues). Polar residues-rich tracts occupy residues 618-638 (GTATVMQTGSSATLSKIQKSS) and 648-658 (RKTSLDVSNSV). Residue Ser651 is modified to Phosphoserine. Position 690 is an omega-N-methylarginine (Arg690). Composition is skewed to polar residues over residues 696-712 (VSSSIDPSLLSTKQGGL) and 726-735 (GRSTPAPVNQ). Positions 733-758 (VNQTDREKEKAKAKAVALDSDNISLK) form a coiled coil. Phosphoserine is present on residues Ser752, Ser756, Ser762, Ser799, and Ser810. Residues 753–772 (DNISLKSIGSPESTPKNQAS) are compositionally biased toward polar residues. 2 disordered regions span residues 800–840 (LANL…PLPS) and 893–982 (MSLP…SPPA). Low complexity-rich tracts occupy residues 807–818 (NSNSLDLPSSSD) and 893–902 (MSLPSAFPSS). At Ser998 the chain carries Phosphoserine. A Phosphothreonine modification is found at Thr1004. Residues 1070–1161 (SSAEERMQSE…SEAQAVIQGA (92 aa)) are a coiled coil. Thr1168 is subject to Phosphothreonine. 4 disordered regions span residues 1172–1202 (LRIKRQNSSDSISSLNSITSHSSIGSSKDAD), 1242–1306 (ATPD…KEVS), 1359–1381 (VAPGPSSGCTPGQVPGSSALSSP), and 1808–1841 (KLYHLPPPSVGPHSTASPPEDRTVKDSTPNSLDS). Ser1179 is subject to Phosphoserine. The segment covering 1179 to 1198 (SSDSISSLNSITSHSSIGSS) has biased composition (low complexity). Residues 1244–1259 (PDSSAPSSPKLQHGST) show a composition bias toward polar residues. Residues 1260 to 1281 (ETASPSIKSSTSSSVGTEVTET) are compositionally biased toward low complexity. Ser1263 carries the phosphoserine modification. The stretch at 1301-1360 (EKKEVSELRSELWEKEMKLTDIRLEALNSAHQLDQLRETMHNMQLEVDLLKAENDRLKVA) forms a coiled coil. Residues 1365 to 1381 (SGCTPGQVPGSSALSSP) are compositionally biased toward polar residues. At Ser1380 the chain carries Phosphoserine.

Belongs to the Nav/unc-53 family. In terms of assembly, interacts with tubulin. In terms of tissue distribution, expressed in heart and brain. Present in brain (at protein level). In adult brain, found almost exclusively in areas of secondary neurogenesis from the hippocampus and the subventricular zone.

It is found in the cytoplasm. The protein localises to the cytoskeleton. Its function is as follows. May be involved in neuronal migration. The sequence is that of Neuron navigator 1 (Nav1) from Mus musculus (Mouse).